The sequence spans 616 residues: Large ribosomal subunit assembly factor BipA (616 aa).

The 197-residue stretch at Lys-8–Lys-204 folds into the tr-type G domain. Residues Asp-20 to Thr-25 and Asn-134 to Asp-137 contribute to the GTP site.

It belongs to the TRAFAC class translation factor GTPase superfamily. Classic translation factor GTPase family. BipA subfamily. Monomer.

It is found in the cytoplasm. The enzyme catalyses GTP + H2O = GDP + phosphate + H(+). Functionally, a 50S ribosomal subunit assembly protein with GTPase activity, required for 50S subunit assembly at low temperatures, may also play a role in translation. Binds GTP and analogs. Binds the 70S ribosome between the 30S and 50S subunits, in a similar position as ribosome-bound EF-G; it contacts a number of ribosomal proteins, both rRNAs and the A-site tRNA. This chain is Large ribosomal subunit assembly factor BipA, found in Haemophilus influenzae (strain ATCC 51907 / DSM 11121 / KW20 / Rd).